Consider the following 106-residue polypeptide: Nucleoid-associated protein bll8115 (106 aa).

This sequence belongs to the YbaB/EbfC family. Homodimer.

The protein resides in the cytoplasm. Its subcellular location is the nucleoid. In terms of biological role, binds to DNA and alters its conformation. May be involved in regulation of gene expression, nucleoid organization and DNA protection. This chain is Nucleoid-associated protein bll8115, found in Bradyrhizobium diazoefficiens (strain JCM 10833 / BCRC 13528 / IAM 13628 / NBRC 14792 / USDA 110).